A 271-amino-acid chain; its full sequence is Formamidopyrimidine-DNA glycosylase (271 aa).

Catalysis depends on Pro-2, which acts as the Schiff-base intermediate with DNA. Residue Glu-3 is the Proton donor of the active site. The active-site Proton donor; for beta-elimination activity is Lys-57. Positions 90, 109, and 151 each coordinate DNA. The FPG-type zinc-finger motif lies at His-236–Thr-270. The active-site Proton donor; for delta-elimination activity is Arg-260.

This sequence belongs to the FPG family. As to quaternary structure, monomer. Zn(2+) serves as cofactor.

The enzyme catalyses Hydrolysis of DNA containing ring-opened 7-methylguanine residues, releasing 2,6-diamino-4-hydroxy-5-(N-methyl)formamidopyrimidine.. It carries out the reaction 2'-deoxyribonucleotide-(2'-deoxyribose 5'-phosphate)-2'-deoxyribonucleotide-DNA = a 3'-end 2'-deoxyribonucleotide-(2,3-dehydro-2,3-deoxyribose 5'-phosphate)-DNA + a 5'-end 5'-phospho-2'-deoxyribonucleoside-DNA + H(+). Functionally, involved in base excision repair of DNA damaged by oxidation or by mutagenic agents. Acts as a DNA glycosylase that recognizes and removes damaged bases. Has a preference for oxidized purines, such as 7,8-dihydro-8-oxoguanine (8-oxoG). Has AP (apurinic/apyrimidinic) lyase activity and introduces nicks in the DNA strand. Cleaves the DNA backbone by beta-delta elimination to generate a single-strand break at the site of the removed base with both 3'- and 5'-phosphates. The polypeptide is Formamidopyrimidine-DNA glycosylase (Shewanella woodyi (strain ATCC 51908 / MS32)).